We begin with the raw amino-acid sequence, 864 residues long: Coiled-coil and C2 domain-containing protein 1B (864 aa).

The segment at glutamine 82–histidine 154 is disordered. Acidic residues-rich tracts occupy residues threonine 89–leucine 104 and valine 111–glutamate 129. The stretch at glutamate 91–glutamate 118 forms a coiled coil. The segment covering glutamate 142 to histidine 154 has biased composition (polar residues). The stretch at glycine 162–glutamine 209 forms a coiled coil. The interval isoleucine 218–asparagine 249 is disordered. Residues valine 229–serine 241 are compositionally biased toward low complexity. The stretch at valine 385–aspartate 412 forms a coiled coil. 2 disordered regions span residues alanine 441–serine 463 and alanine 478–leucine 502. Over residues proline 444–proline 453 the composition is skewed to pro residues. 2 coiled-coil regions span residues valine 464–glutamate 488 and proline 535–leucine 564. The C2 domain maps to histidine 685–valine 820.

It belongs to the CC2D1 family.

This chain is Coiled-coil and C2 domain-containing protein 1B (cc2d1b), found in Xenopus laevis (African clawed frog).